Reading from the N-terminus, the 589-residue chain is Arginine--tRNA ligase (589 aa).

The 'HIGH' region motif lies at 123 to 133; it reads ANVAKPMHVGH.

Belongs to the class-I aminoacyl-tRNA synthetase family. As to quaternary structure, monomer.

It is found in the cytoplasm. It carries out the reaction tRNA(Arg) + L-arginine + ATP = L-arginyl-tRNA(Arg) + AMP + diphosphate. In Hyphomonas neptunium (strain ATCC 15444), this protein is Arginine--tRNA ligase.